The sequence spans 295 residues: Non-selective voltage-gated ion channel VDAC2 (295 aa).

ATP contacts are provided by Lys-24 and Lys-32. An N6-acetyllysine; alternate modification is found at Lys-32. N6-succinyllysine; alternate is present on Lys-32. Lys-32 participates in a covalent cross-link: Glycyl lysine isopeptide (Lys-Gly) (interchain with G-Cter in ubiquitin); alternate. 2 beta stranded membrane-spanning segments follow: residues 38–45 (LVKLDVKT) and 51–60 (VEFSTSGSSN). Lys-65 is covalently cross-linked (Glycyl lysine isopeptide (Lys-Gly) (interchain with G-Cter in ubiquitin)). Residues 66-76 (VSGTLETKYKW) traverse the membrane as a beta stranded segment. Position 79 is a phosphotyrosine (Tyr-79). Beta stranded transmembrane passes span 81 to 88 (LTFTEKWN), 92 to 100 (TLGTEIAIE), and 107 to 116 (LKLTFDTTFS). Phosphothreonine is present on Thr-119. Lys-121 bears the N6-acetyllysine; alternate mark. Lys-121 is covalently cross-linked (Glycyl lysine isopeptide (Lys-Gly) (interchain with G-Cter in ubiquitin); alternate). A Glycyl lysine isopeptide (Lys-Gly) (interchain with G-Cter in ubiquitin) cross-link involves residue Lys-122. 4 beta stranded membrane passes run 122-131 (KSGKIKSAYK), 135-144 (INLGCDVDFD), 148-157 (PAIHGSAVFG), and 161-170 (WLAGYQMTFD). Lys-173 is covalently cross-linked (Glycyl lysine isopeptide (Lys-Gly) (interchain with G-Cter in ubiquitin)). Transmembrane regions (beta stranded) follow at residues 177–187 (TRSNFAVGYRT), 190–197 (FQLHTNVN), 201–210 (EFGGSIYQKV), 214–222 (FDTSVNLAW), 229–238 (TRFGIAAKYQ), and 243–250 (ASISAKVN). A Phosphoserine modification is found at Ser-252. NAD(+)-binding positions include 254–256 (LIG) and 272–276 (SALVD). Transmembrane regions (beta stranded) follow at residues 254–263 (LIGVGYTQTL) and 267–275 (VKLTLSALV). Lys-278 bears the N6-acetyllysine; alternate mark. Lys-278 participates in a covalent cross-link: Glycyl lysine isopeptide (Lys-Gly) (interchain with G-Cter in ubiquitin); alternate. The chain crosses the membrane as a beta stranded span at residues 285 to 295 (HKLGLALELEA).

Belongs to the eukaryotic mitochondrial porin family. In terms of assembly, monomer, homodimer and higher order oligomers; formation of higher order structures is necessary for scramblase activity. Interacts with ARMC12 in a TBC1D21-dependent manner. Interacts with KLC3. Interacts with SPATA33. Interacts with PPP3CC in a SPATA33-dependent manner. Post-translationally, ubiquitinated by PRKN during mitophagy, leading to its degradation and enhancement of mitophagy. Deubiquitinated by USP30. In terms of tissue distribution, highest levels of expression detected in testis, less but still abundant expression in heart, kidney, brain, and skeletal muscle. Expressed in the sperm midpiece (at protein level).

The protein localises to the mitochondrion outer membrane. It localises to the membrane. The catalysed reaction is chloride(in) = chloride(out). The enzyme catalyses K(+)(in) = K(+)(out). It catalyses the reaction a 1,2-diacyl-sn-glycero-3-phospho-L-serine(in) = a 1,2-diacyl-sn-glycero-3-phospho-L-serine(out). It carries out the reaction a 1,2-diacyl-sn-glycero-3-phosphocholine(in) = a 1,2-diacyl-sn-glycero-3-phosphocholine(out). The catalysed reaction is a 1,2-diacyl-sn-glycero-3-phospho-(1D-myo-inositol)(in) = a 1,2-diacyl-sn-glycero-3-phospho-(1D-myo-inositol)(out). In terms of biological role, non-selective voltage-gated ion channel that mediates the transport of anions and cations through the mitochondrion outer membrane and plasma membrane. The channel adopts an open conformation at zero mV and a closed conformation at both positive and negative potentials. There are two populations of channels; the main that functions in a lower open-state conductance with lower ion selectivity, that switch, in a voltage-dependent manner, from the open to a low-conducting 'closed' state and the other that has a normal ion selectivity in the typical high conductance, 'open' state. Binds various lipids, including the sphingolipid ceramide, the phospholipid phosphatidylcholine, and the sterols cholesterol and oxysterol. Binding of ceramide promotes the mitochondrial outer membrane permeabilization (MOMP) apoptotic pathway. Its function is as follows. Catalyzes the scrambling of phospholipids across the outer mitochondrial membrane; the mechanism is unrelated to channel activity and is capable of translocating both anionic and zwitterionic phospholipids. The protein is Non-selective voltage-gated ion channel VDAC2 of Mus musculus (Mouse).